We begin with the raw amino-acid sequence, 630 residues long: tRNA uridine 5-carboxymethylaminomethyl modification enzyme MnmG (630 aa).

13–18 (GGGHAG) lines the FAD pocket. 273-287 (GPRYCPSIEDKIHRF) contributes to the NAD(+) binding site.

Belongs to the MnmG family. Homodimer. Heterotetramer of two MnmE and two MnmG subunits. FAD is required as a cofactor.

It is found in the cytoplasm. Functionally, NAD-binding protein involved in the addition of a carboxymethylaminomethyl (cmnm) group at the wobble position (U34) of certain tRNAs, forming tRNA-cmnm(5)s(2)U34. This chain is tRNA uridine 5-carboxymethylaminomethyl modification enzyme MnmG, found in Pseudomonas aeruginosa (strain LESB58).